The primary structure comprises 186 residues: Casparian strip membrane protein 5 (186 aa).

Residues 1–23 lie on the Cytoplasmic side of the membrane; the sequence is MEHGEISSKAPLVAPVAAGVNRA. Residues 24 to 44 traverse the membrane as a helical segment; it reads VAVVDTFLRFIAIIGTIGSAI. The Extracellular segment spans residues 45–73; it reads AMGTTNETLPFFTQFIQFEAKYSDLPSFT. A glycan (N-linked (GlcNAc...) asparagine) is linked at Asn50. Residues 74-94 form a helical membrane-spanning segment; the sequence is FFVAANAVVCTYLVLSIPLSI. At 95-106 the chain is on the cytoplasmic side; it reads VHILRPRARYSR. Residues 107–127 form a helical membrane-spanning segment; sequence LFLVFFDTAMLALLTAGASAA. The Extracellular segment spans residues 128 to 160; sequence AAIVYLAHKGNVRANWFSICQQFDSFCERISGS. The helical transmembrane segment at 161–181 threads the bilayer; the sequence is LIGSFAAMVLLVVLITLSAFA. The Cytoplasmic segment spans residues 182-186; it reads LARRH.

Belongs to the Casparian strip membrane proteins (CASP) family. Homodimer and heterodimers.

It is found in the cell membrane. Functionally, regulates membrane-cell wall junctions and localized cell wall deposition. Required for establishment of the Casparian strip membrane domain (CSD) and the subsequent formation of Casparian strips, a cell wall modification of the root endodermis that determines an apoplastic barrier between the intraorganismal apoplasm and the extraorganismal apoplasm and prevents lateral diffusion. The sequence is that of Casparian strip membrane protein 5 from Oryza sativa subsp. japonica (Rice).